We begin with the raw amino-acid sequence, 252 residues long: 3-dehydroquinate dehydratase (252 aa).

Residues S21, 46–48, and R82 each bind 3-dehydroquinate; that span reads EWR. H143 (proton donor/acceptor) is an active-site residue. K170 acts as the Schiff-base intermediate with substrate in catalysis. 3 residues coordinate 3-dehydroquinate: R213, S232, and Q236.

This sequence belongs to the type-I 3-dehydroquinase family. As to quaternary structure, homodimer.

It carries out the reaction 3-dehydroquinate = 3-dehydroshikimate + H2O. The protein operates within metabolic intermediate biosynthesis; chorismate biosynthesis; chorismate from D-erythrose 4-phosphate and phosphoenolpyruvate: step 3/7. In terms of biological role, involved in the third step of the chorismate pathway, which leads to the biosynthesis of aromatic amino acids. Catalyzes the cis-dehydration of 3-dehydroquinate (DHQ) and introduces the first double bond of the aromatic ring to yield 3-dehydroshikimate. This Escherichia coli (strain 55989 / EAEC) protein is 3-dehydroquinate dehydratase.